A 284-amino-acid chain; its full sequence is MTANIIDGKAIAKQVRSAVAQRVSERVAQNLRAPGLAVVLVGLDPASQVYVGSKRKACEEVGFISKSFDLPANTTEQTLLELIDELNNDQEIDGILVQLPLPEGLDVEKILERITPHKDVDGFHPYNIGRLAQRMPALRPCTPKGIITLLDSTGVRYKGLHAVVVGASNIVGRPMALELLLAGCTTTVCHKFTQDLETHVRRADLLVVAVGKPEFIPGDWVKEGAIVIDVGINRLDSGKLVGDVEYSVAEQKADFITPVPGGVGPMTVASLIENTLEACEKYHS.

NADP(+) is bound by residues 166-168 and Ile-232; that span reads GAS.

The protein belongs to the tetrahydrofolate dehydrogenase/cyclohydrolase family. As to quaternary structure, homodimer.

It carries out the reaction (6R)-5,10-methylene-5,6,7,8-tetrahydrofolate + NADP(+) = (6R)-5,10-methenyltetrahydrofolate + NADPH. It catalyses the reaction (6R)-5,10-methenyltetrahydrofolate + H2O = (6R)-10-formyltetrahydrofolate + H(+). It participates in one-carbon metabolism; tetrahydrofolate interconversion. In terms of biological role, catalyzes the oxidation of 5,10-methylenetetrahydrofolate to 5,10-methenyltetrahydrofolate and then the hydrolysis of 5,10-methenyltetrahydrofolate to 10-formyltetrahydrofolate. The polypeptide is Bifunctional protein FolD (Pseudoalteromonas translucida (strain TAC 125)).